We begin with the raw amino-acid sequence, 359 residues long: Transcription factor MafA (359 aa).

A Phosphoserine modification is found at Ser-14. A Glycyl lysine isopeptide (Lys-Gly) (interchain with G-Cter in SUMO2) cross-link involves residue Lys-32. Disordered stretches follow at residues 40–105 and 172–226; these read RFCH…VGGA and GGGA…AGHH. Low complexity predominate over residues 46-73; sequence PPGSLSSTPLSTPCSSVPSSPSFCAPSP. Ser-49 carries the phosphoserine modification. Thr-53 and Thr-57 each carry phosphothreonine. Ser-61 and Ser-65 each carry phosphoserine. Over residues 74–84 the composition is skewed to gly residues; it reads GTGGGAGGGGS. The segment covering 181–209 has biased composition (basic residues); the sequence is GHHHGAHHTAHHHHSAHHHHHHHHHHGGS. The span at 210–224 shows a compositional bias: gly residues; sequence GHHGGGAGHGGGGAG. The tract at residues 260-285 is basic motif; sequence RLKQKRRTLKNRGYAQSCRFKRVQQR. Positions 260 to 323 constitute a bZIP domain; sequence RLKQKRRTLK…DLYKEKYEKL (64 aa). Residues 288-309 form a leucine-zipper region; sequence LESEKCQLQSQVEQLKLEVGRL. Positions 322-359 are disordered; the sequence is KLAGRGGPGGAGGAGFPREPSPAQAGPGAAKGAPDFFL. Residues 325-336 are compositionally biased toward gly residues; that stretch reads GRGGPGGAGGAG. Positions 343–359 are enriched in low complexity; sequence PAQAGPGAAKGAPDFFL.

This sequence belongs to the bZIP family. Maf subfamily. Forms homodimers. Interacts with NEUROD1 and PDX1. May interact with MAFB, FOS, JUN and PCAF. Ubiquitinated, leading to its degradation by the proteasome. Post-translationally, phosphorylated at tyrosines. As to expression, expressed in brain, lung, spleen, pancreas and kidney. In the pancreas, expressed in the insulin-producing beta-cells of the islets of Langerhans (at protein level). Also expressed in the eye.

Its subcellular location is the nucleus. Transcriptional factor that activates insulin gene expression. Acts synergistically with NEUROD1/BETA2 and PDX1. Binds the insulin enhancer C1/RIPE3b element. Binds to consensus TRE-type MARE 5'-TGCTGACTCAGCA-3' DNA sequence. This is Transcription factor MafA (Mafa) from Mus musculus (Mouse).